The following is a 335-amino-acid chain: uncharacterized protein (335 aa).

The interval 201-236 (GPMAKNKARRKEDNYDTHNCDDANQDKKEEAEGKNT) is disordered. The segment covering 210–235 (RKEDNYDTHNCDDANQDKKEEAEGKN) has biased composition (basic and acidic residues).

In terms of biological role, dispensable for normal development and fertility. This is an uncharacterized protein from Homo sapiens (Human).